The chain runs to 169 residues: Ribosome maturation factor RimM (169 aa).

Positions Glu94 to Leu166 constitute a PRC barrel domain.

This sequence belongs to the RimM family. As to quaternary structure, binds ribosomal protein uS19.

Its subcellular location is the cytoplasm. In terms of biological role, an accessory protein needed during the final step in the assembly of 30S ribosomal subunit, possibly for assembly of the head region. Essential for efficient processing of 16S rRNA. May be needed both before and after RbfA during the maturation of 16S rRNA. It has affinity for free ribosomal 30S subunits but not for 70S ribosomes. The chain is Ribosome maturation factor RimM from Corynebacterium efficiens (strain DSM 44549 / YS-314 / AJ 12310 / JCM 11189 / NBRC 100395).